We begin with the raw amino-acid sequence, 344 residues long: Arginine N-succinyltransferase (344 aa).

Leu-125 provides a ligand contact to succinyl-CoA. The active-site Proton donor is His-229.

The protein belongs to the arginine N-succinyltransferase family.

It catalyses the reaction succinyl-CoA + L-arginine = N(2)-succinyl-L-arginine + CoA + H(+). Its pathway is amino-acid degradation; L-arginine degradation via AST pathway; L-glutamate and succinate from L-arginine: step 1/5. Functionally, catalyzes the transfer of succinyl-CoA to arginine to produce N(2)-succinylarginine. This chain is Arginine N-succinyltransferase, found in Escherichia coli O127:H6 (strain E2348/69 / EPEC).